A 255-amino-acid chain; its full sequence is Zinc finger CCCH domain-containing protein 37 (255 aa).

2 consecutive C3H1-type zinc fingers follow at residues 98 to 128 (AYTG…HGTF) and 137 to 159 (YRTR…AHTA).

In Oryza sativa subsp. japonica (Rice), this protein is Zinc finger CCCH domain-containing protein 37.